The sequence spans 135 residues: Endoribonuclease YbeY (135 aa).

Zn(2+) is bound by residues His-94, His-98, and His-104.

The protein belongs to the endoribonuclease YbeY family. Zn(2+) is required as a cofactor.

It is found in the cytoplasm. Single strand-specific metallo-endoribonuclease involved in late-stage 70S ribosome quality control and in maturation of the 3' terminus of the 16S rRNA. This is Endoribonuclease YbeY from Campylobacter jejuni subsp. jejuni serotype O:2 (strain ATCC 700819 / NCTC 11168).